The primary structure comprises 453 residues: Bifunctional protein GlmU (453 aa).

The tract at residues 1–231 (MERTCLAIIL…EVEMTGCNNR (231 aa)) is pyrophosphorylase. Residues 10–13 (LAAG), Lys-24, Gln-77, 82–83 (GT), 105–107 (YGD), Gly-143, Glu-157, Asn-172, and Asn-229 each bind UDP-N-acetyl-alpha-D-glucosamine. Asp-107 contributes to the Mg(2+) binding site. A Mg(2+)-binding site is contributed by Asn-229. Residues 232–252 (AELAFIERLWQERRRHELMLS) form a linker region. The tract at residues 253–453 (GVTMIAPETV…AIKAAKKGSH (201 aa)) is N-acetyltransferase. UDP-N-acetyl-alpha-D-glucosamine is bound by residues Arg-318 and Lys-336. His-348 (proton acceptor) is an active-site residue. UDP-N-acetyl-alpha-D-glucosamine contacts are provided by Tyr-351 and Asn-362. Residues Ala-365, 371–372 (NY), Ser-390, Ser-408, and Arg-425 each bind acetyl-CoA.

The protein in the N-terminal section; belongs to the N-acetylglucosamine-1-phosphate uridyltransferase family. In the C-terminal section; belongs to the transferase hexapeptide repeat family. As to quaternary structure, homotrimer. Mg(2+) is required as a cofactor.

The protein localises to the cytoplasm. It carries out the reaction alpha-D-glucosamine 1-phosphate + acetyl-CoA = N-acetyl-alpha-D-glucosamine 1-phosphate + CoA + H(+). The catalysed reaction is N-acetyl-alpha-D-glucosamine 1-phosphate + UTP + H(+) = UDP-N-acetyl-alpha-D-glucosamine + diphosphate. The protein operates within nucleotide-sugar biosynthesis; UDP-N-acetyl-alpha-D-glucosamine biosynthesis; N-acetyl-alpha-D-glucosamine 1-phosphate from alpha-D-glucosamine 6-phosphate (route II): step 2/2. Its pathway is nucleotide-sugar biosynthesis; UDP-N-acetyl-alpha-D-glucosamine biosynthesis; UDP-N-acetyl-alpha-D-glucosamine from N-acetyl-alpha-D-glucosamine 1-phosphate: step 1/1. It participates in bacterial outer membrane biogenesis; LPS lipid A biosynthesis. Its function is as follows. Catalyzes the last two sequential reactions in the de novo biosynthetic pathway for UDP-N-acetylglucosamine (UDP-GlcNAc). The C-terminal domain catalyzes the transfer of acetyl group from acetyl coenzyme A to glucosamine-1-phosphate (GlcN-1-P) to produce N-acetylglucosamine-1-phosphate (GlcNAc-1-P), which is converted into UDP-GlcNAc by the transfer of uridine 5-monophosphate (from uridine 5-triphosphate), a reaction catalyzed by the N-terminal domain. This Rhizobium rhizogenes (strain K84 / ATCC BAA-868) (Agrobacterium radiobacter) protein is Bifunctional protein GlmU.